The sequence spans 155 residues: Large ribosomal subunit protein bL17 (155 aa).

The protein belongs to the bacterial ribosomal protein bL17 family. As to quaternary structure, part of the 50S ribosomal subunit. Contacts protein L32.

This is Large ribosomal subunit protein bL17 from Syntrophotalea carbinolica (strain DSM 2380 / NBRC 103641 / GraBd1) (Pelobacter carbinolicus).